The chain runs to 472 residues: 3-isopropylmalate dehydratase large subunit (472 aa).

The [4Fe-4S] cluster site is built by Cys347, Cys407, and Cys410.

This sequence belongs to the aconitase/IPM isomerase family. LeuC type 1 subfamily. Heterodimer of LeuC and LeuD. The cofactor is [4Fe-4S] cluster.

It catalyses the reaction (2R,3S)-3-isopropylmalate = (2S)-2-isopropylmalate. Its pathway is amino-acid biosynthesis; L-leucine biosynthesis; L-leucine from 3-methyl-2-oxobutanoate: step 2/4. Its function is as follows. Catalyzes the isomerization between 2-isopropylmalate and 3-isopropylmalate, via the formation of 2-isopropylmaleate. The protein is 3-isopropylmalate dehydratase large subunit of Bacillus subtilis (strain 168).